Consider the following 277-residue polypeptide: Energy-coupling factor transporter ATP-binding protein EcfA1 (277 aa).

The ABC transporter domain occupies 5–240 (LEVENLVFKY…SEDMVEIGLD (236 aa)). 40-47 (GQNGSGKS) serves as a coordination point for ATP.

This sequence belongs to the ABC transporter superfamily. Energy-coupling factor EcfA family. As to quaternary structure, forms a stable energy-coupling factor (ECF) transporter complex composed of 2 membrane-embedded substrate-binding proteins (S component), 2 ATP-binding proteins (A component) and 2 transmembrane proteins (T component).

It is found in the cell membrane. Functionally, ATP-binding (A) component of a common energy-coupling factor (ECF) ABC-transporter complex. Unlike classic ABC transporters this ECF transporter provides the energy necessary to transport a number of different substrates. In Lactococcus lactis subsp. lactis (strain IL1403) (Streptococcus lactis), this protein is Energy-coupling factor transporter ATP-binding protein EcfA1.